The following is a 422-amino-acid chain: Histidine--tRNA ligase (422 aa).

This sequence belongs to the class-II aminoacyl-tRNA synthetase family. In terms of assembly, homodimer.

It localises to the cytoplasm. The enzyme catalyses tRNA(His) + L-histidine + ATP = L-histidyl-tRNA(His) + AMP + diphosphate + H(+). The chain is Histidine--tRNA ligase (hisS) from Photobacterium profundum (strain SS9).